A 78-amino-acid chain; its full sequence is Cell division topological specificity factor (78 aa).

Belongs to the MinE family.

Prevents the cell division inhibition by proteins MinC and MinD at internal division sites while permitting inhibition at polar sites. This ensures cell division at the proper site by restricting the formation of a division septum at the midpoint of the long axis of the cell. The sequence is that of Cell division topological specificity factor from Helicobacter hepaticus (strain ATCC 51449 / 3B1).